The sequence spans 390 residues: Glucose-fructose oxidoreductase domain-containing protein 1 (390 aa).

A signal peptide spans 1 to 21 (MLPGVGVFGTSLTARVIIPLL).

The protein belongs to the Gfo/Idh/MocA family. In terms of assembly, homodimer. Interacts with NKIRAS2.

The protein localises to the secreted. Probably catalytically inactive enzyme. Does not bind NAD or NADP. The chain is Glucose-fructose oxidoreductase domain-containing protein 1 (Gfod1) from Mus musculus (Mouse).